The primary structure comprises 103 residues: U6 snRNA-associated Sm-like protein LSm7 (103 aa).

Ala-2 carries the post-translational modification N-acetylalanine. The region spanning 10–90 is the Sm domain; the sequence is ESILDLSKYI…VVLICPQDGM (81 aa).

Belongs to the snRNP Sm proteins family. In terms of assembly, component of the precatalytic spliceosome (spliceosome B complex). Component of the U4/U6-U5 tri-snRNP complex, a building block of the precatalytic spliceosome (spliceosome B complex). The U4/U6-U5 tri-snRNP complex is composed of the U4, U6 and U5 snRNAs and at least PRPF3, PRPF4, PRPF6, PRPF8, PRPF31, SNRNP200, TXNL4A, SNRNP40, SNRPB, SNRPD1, SNRPD2, SNRPD3, SNRPE, SNRPF, SNRPG, DDX23, CD2BP2, PPIH, SNU13, EFTUD2, SART1 and USP39, plus LSM2, LSM3, LSM4, LSM5, LSM6, LSM7 and LSM8. LSM2, LSM3, LSM4, LSM5, LSM6, LSM7 and LSM8 form a heptameric, ring-shaped subcomplex (the LSM2-8 complex) that is part of the U4/U6-U5 tri-snRNP complex and the precatalytic spliceosome. Interacts with TACC1.

The protein localises to the nucleus. In terms of biological role, plays a role in pre-mRNA splicing as component of the U4/U6-U5 tri-snRNP complex that is involved in spliceosome assembly, and as component of the precatalytic spliceosome (spliceosome B complex). The heptameric LSM2-8 complex binds specifically to the 3'-terminal U-tract of U6 snRNA. This chain is U6 snRNA-associated Sm-like protein LSm7 (LSM7), found in Homo sapiens (Human).